The following is a 357-amino-acid chain: Serine protease 1 (357 aa).

The first 29 residues, 1–29 (MRRTTRARTGLSALLLAASLGLGAAPAGA), serve as a signal peptide directing secretion. Residues 30 to 170 (DAPQRPAPTP…TRVPGVFQRE (141 aa)) constitute a propeptide that is removed on maturation. C184 and C204 are disulfide-bonded. Residues H203, D232, and S313 each act as charge relay system in the active site. A disulfide bond links C307 and C333.

The protein belongs to the peptidase S1 family.

It localises to the secreted. Its function is as follows. Serine protease that preferentially cleaves peptide bonds on the C-terminal side of aspartate and glutamate with a 10-fold higher reactivity for a glutamyl bond than an aspartyl bond. The polypeptide is Serine protease 1 (Streptomyces fradiae (Streptomyces roseoflavus)).